We begin with the raw amino-acid sequence, 768 residues long: Ral guanine nucleotide dissociation stimulator-like 1 (768 aa).

An N-terminal Ras-GEF domain is found at 65–196 (KIRTIKAGTL…RAQNLLEQFQ (132 aa)). The 270-residue stretch at 232–501 (SEDLVAEQLT…YALSCEIEAA (270 aa)) folds into the Ras-GEF domain. Residue Ser520 is modified to Phosphoserine. A disordered region spans residues 530–623 (PGSTPTKEQP…PPTCNNNPKI (94 aa)). 2 stretches are compositionally biased toward low complexity: residues 541–561 (SAASGSSGESMDSVSVSSCES) and 586–596 (ESSSSCSSIHS). Over residues 597–621 (MDTNSSGMSSLINPLSSPPTCNNNP) the composition is skewed to polar residues. Residues 648 to 735 (DTCIIRISVE…FDFILRKKNS (88 aa)) form the Ras-associating domain.

In terms of assembly, interacts with Ras.

Functionally, probable guanine nucleotide exchange factor. The chain is Ral guanine nucleotide dissociation stimulator-like 1 (Rgl1) from Mus musculus (Mouse).